A 51-amino-acid polypeptide reads, in one-letter code: Large ribosomal subunit protein eL39 (51 aa).

The segment at 1–23 is disordered; it reads MSALKKSFIKRKLAKKQKQNRPM. A compositionally biased stretch (basic residues) spans 7 to 19; that stretch reads SFIKRKLAKKQKQ.

This sequence belongs to the eukaryotic ribosomal protein eL39 family. Interacts with impact.

In Caenorhabditis elegans, this protein is Large ribosomal subunit protein eL39 (rpl-39).